Consider the following 1035-residue polypeptide: Enteropeptidase (1035 aa).

A lipid anchor (N-myristoyl glycine) is attached at Gly-2. Residues 2-18 lie on the Cytoplasmic side of the membrane; that stretch reads GSKRSVPSRHRSLTTYE. Residues 19–47 form a helical; Signal-anchor for type II membrane protein membrane-spanning segment; that stretch reads VMFAVLFVILVALCAGLIAVSWLSIQGSV. The Extracellular segment spans residues 48-1035; the sequence is KDAAFGKSHE…FTEWIQSFLH (988 aa). Residues 54 to 169 form the SEA domain; the sequence is KSHEARGTLK…NSIDITASLE (116 aa). N-linked (GlcNAc...) asparagine glycosylation is found at Asn-116, Asn-147, Asn-170, and Asn-194. The region spanning 197 to 238 is the LDL-receptor class A 1 domain; sequence IECPPDSRLCADALKCIAIDLFCDGELNCPDGSDEDNKTCAT. 4 disulfides stabilise this stretch: Cys-199–Cys-212, Cys-206–Cys-225, Cys-219–Cys-236, and Cys-240–Cys-269. N-linked (GlcNAc...) asparagine glycans are attached at residues Asn-233, Asn-263, Asn-264, Asn-404, Asn-456, Asn-486, Asn-519, Asn-550, and Asn-646. The 111-residue stretch at 240 to 350 folds into the CUB 1 domain; sequence CDGRFLLTGS…IGFKVTYTAF (111 aa). Positions 358–520 constitute an MAM domain; the sequence is YEKINCNFED…ISLTYGICNV (163 aa). Residues Cys-540 and Cys-568 are joined by a disulfide bond. The CUB 2 domain maps to 540–650; it reads CGGPHDLWEP…QGFKANFTTG (111 aa). One can recognise an LDL-receptor class A 2 domain in the interval 657–695; it reads EPCKEDNFQCKDGECIPLVNLCDGFPHCKDGSDEAHCVR. 3 disulfide bridges follow: Cys-659–Cys-671, Cys-666–Cys-684, and Cys-678–Cys-693. The SRCR domain maps to 694–787; sequence VRLFNGTTDS…LILLQCNYKS (94 aa). 4 N-linked (GlcNAc...) asparagine glycosylation sites follow: Asn-698, Asn-722, Asn-741, and Asn-762. 6 cysteine pairs are disulfide-bonded: Cys-773/Cys-783, Cys-788/Cys-912, Cys-826/Cys-842, Cys-926/Cys-993, Cys-957/Cys-972, and Cys-983/Cys-1011. Residues 801 to 1035 enclose the Peptidase S1 domain; that stretch reads IVGGSDSREG…FTEWIQSFLH (235 aa). The active-site Charge relay system is His-841. Residue Asn-864 is glycosylated (N-linked (GlcNAc...) asparagine). Residue Asp-892 is the Charge relay system of the active site. Asn-903 and Asn-965 each carry an N-linked (GlcNAc...) asparagine glycan. The Charge relay system role is filled by Ser-987.

This sequence belongs to the peptidase S1 family. In terms of assembly, heterodimer of a catalytic (light) chain and a multidomain (heavy) chain linked by a disulfide bond. The chains are derived from a single precursor that is cleaved by a trypsin-like protease. As to expression, intestinal brush border.

Its subcellular location is the membrane. The enzyme catalyses Activation of trypsinogen by selective cleavage of 6-Lys-|-Ile-7 bond.. Functionally, responsible for initiating activation of pancreatic proteolytic proenzymes (trypsin, chymotrypsin and carboxypeptidase A). It catalyzes the conversion of trypsinogen to trypsin which in turn activates other proenzymes including chymotrypsinogen, procarboxypeptidases, and proelastases. This chain is Enteropeptidase (TMPRSS15), found in Bos taurus (Bovine).